Consider the following 809-residue polypeptide: Plasminogen (809 aa).

The first 19 residues, 1 to 19 (MDHKEVVLLLLLFLKSGLG), serve as a signal peptide directing secretion. The PAN domain maps to 20–98 (DSLDDYVNTQ…RDVVLFEKRI (79 aa)). Disulfide bonds link Cys-49/Cys-73, Cys-53/Cys-61, Cys-103/Cys-181, Cys-124/Cys-164, Cys-152/Cys-176, Cys-185/Cys-262, Cys-188/Cys-316, Cys-206/Cys-245, Cys-234/Cys-257, Cys-275/Cys-352, Cys-296/Cys-335, Cys-324/Cys-347, Cys-377/Cys-454, Cys-398/Cys-437, Cys-426/Cys-449, Cys-480/Cys-559, Cys-501/Cys-542, Cys-530/Cys-554, Cys-566/Cys-684, Cys-576/Cys-584, Cys-606/Cys-622, Cys-698/Cys-765, Cys-728/Cys-744, and Cys-755/Cys-783. 2 consecutive Kringle domains span residues 103–181 (CKTG…IPEC) and 185–262 (CMHC…IPRC). Thr-268 is a glycosylation site (O-linked (GalNAc...) threonine). Kringle domains are found at residues 275 to 352 (CLKG…IPSC), 377 to 454 (CYRG…LKKC), and 480 to 559 (CMFG…VPQC). N-linked (GlcNAc...) asparagine glycosylation is present at Asn-308. In terms of domain architecture, Peptidase S1 spans 580 to 807 (VVGGCVSIPH…FVTWIEEIMR (228 aa)). The residue at position 596 (Ser-596) is a Phosphoserine. Residues His-621 and Asp-664 each act as charge relay system in the active site. The active-site Charge relay system is the Ser-759.

This sequence belongs to the peptidase S1 family. Plasminogen subfamily. In terms of assembly, interacts with CSPG4 and AMOT. Interacts (via the Kringle domains) with HRG; the interaction tethers PLG to the cell surface and enhances its activation. Interacts (via Kringle 4 domain) with ADA; the interaction stimulates PLG activation when in complex with DPP4. Angiostatin: Interacts with ATP5F1A; the interaction inhibits most of the angiogenic effects of angiostatin. In terms of processing, N-linked glycan contains N-acetyllactosamine, sialic acid and is core fucosylated. O-linked glycans consist of Gal-GalNAc disaccharide which is modified with up to 2 sialic acid residues (microheterogeneity). Post-translationally, in the presence of the inhibitor, the activation involves only cleavage after Arg-579, yielding two chains held together by two disulfide bonds. In the absence of the inhibitor, the activation involves additionally the removal of the activation peptide.

The protein localises to the secreted. It carries out the reaction Preferential cleavage: Lys-|-Xaa &gt; Arg-|-Xaa, higher selectivity than trypsin. Converts fibrin into soluble products.. Converted into plasmin by plasminogen activators, both plasminogen and its activator being bound to fibrin. Cannot be activated with streptokinase. In terms of biological role, plasmin dissolves the fibrin of blood clots and acts as a proteolytic factor in a variety of other processes including embryonic development, tissue remodeling, tumor invasion, and inflammation. In ovulation, weakens the walls of the Graafian follicle. It activates the urokinase-type plasminogen activator, collagenases and several complement zymogens, such as C1, C4 and C5. Cleavage of fibronectin and laminin leads to cell detachment and apoptosis. Also cleaves fibrin, thrombospondin and von Willebrand factor. Its role in tissue remodeling and tumor invasion may be modulated by CSPG4. Binds to cells. The sequence is that of Plasminogen (PLG) from Sus scrofa (Pig).